A 467-amino-acid chain; its full sequence is 5-phosphohydroxy-L-lysine phospho-lyase (467 aa).

Lysine 278 bears the N6-(pyridoxal phosphate)lysine mark.

The protein belongs to the class-III pyridoxal-phosphate-dependent aminotransferase family. Homotetramer. The cofactor is pyridoxal 5'-phosphate.

Its subcellular location is the mitochondrion. It carries out the reaction (5R)-5-phosphooxy-L-lysine + H2O = (S)-2-amino-6-oxohexanoate + NH4(+) + phosphate. Functionally, catalyzes the pyridoxal-phosphate-dependent breakdown of 5-phosphohydroxy-L-lysine, converting it to ammonia, inorganic phosphate and 2-aminoadipate semialdehyde. The protein is 5-phosphohydroxy-L-lysine phospho-lyase (Phykpl) of Mus musculus (Mouse).